Reading from the N-terminus, the 476-residue chain is tRNA(Ile)-lysidine synthase (476 aa).

ATP is bound at residue S30 to S35.

Belongs to the tRNA(Ile)-lysidine synthase family.

The protein localises to the cytoplasm. The enzyme catalyses cytidine(34) in tRNA(Ile2) + L-lysine + ATP = lysidine(34) in tRNA(Ile2) + AMP + diphosphate + H(+). In terms of biological role, ligates lysine onto the cytidine present at position 34 of the AUA codon-specific tRNA(Ile) that contains the anticodon CAU, in an ATP-dependent manner. Cytidine is converted to lysidine, thus changing the amino acid specificity of the tRNA from methionine to isoleucine. This Bacillus cereus (strain ZK / E33L) protein is tRNA(Ile)-lysidine synthase.